The sequence spans 524 residues: Na(+)/H(+) antiporter NhaB (524 aa).

9 consecutive transmembrane segments (helical) span residues 13 to 33, 98 to 118, 140 to 160, 239 to 259, 304 to 324, 325 to 345, 358 to 378, 448 to 468, and 479 to 499; these read FLGN…IINP, LLLV…LFVF, AFLS…SVSV, FFIR…LVCL, AIIG…VGLV, GLSV…HSLG, LTVF…TPII, ATPN…APLI, and ALPY…FLLV.

This sequence belongs to the NhaB Na(+)/H(+) (TC 2.A.34) antiporter family.

It is found in the cell inner membrane. The enzyme catalyses 2 Na(+)(in) + 3 H(+)(out) = 2 Na(+)(out) + 3 H(+)(in). Its function is as follows. Na(+)/H(+) antiporter that extrudes sodium in exchange for external protons. The chain is Na(+)/H(+) antiporter NhaB from Yersinia pestis (strain Pestoides F).